The sequence spans 442 residues: tRNA(Ile)-lysidine synthase (442 aa).

Ser-30–Ser-35 contacts ATP.

The protein belongs to the tRNA(Ile)-lysidine synthase family.

It localises to the cytoplasm. It carries out the reaction cytidine(34) in tRNA(Ile2) + L-lysine + ATP = lysidine(34) in tRNA(Ile2) + AMP + diphosphate + H(+). In terms of biological role, ligates lysine onto the cytidine present at position 34 of the AUA codon-specific tRNA(Ile) that contains the anticodon CAU, in an ATP-dependent manner. Cytidine is converted to lysidine, thus changing the amino acid specificity of the tRNA from methionine to isoleucine. This Pseudomonas fluorescens (strain Pf0-1) protein is tRNA(Ile)-lysidine synthase.